The following is a 289-amino-acid chain: ATP synthase subunit a (289 aa).

A run of 6 helical transmembrane segments spans residues 43 to 63 (AFHV…VLIF), 101 to 121 (SAVI…MNAV), 160 to 180 (LSVF…GGFI), 193 to 213 (IFVQ…TLIA), 232 to 252 (VFIL…GLGI), and 259 to 279 (AVFH…LTIV).

It belongs to the ATPase A chain family. F-type ATPases have 2 components, CF(1) - the catalytic core - and CF(0) - the membrane proton channel. CF(1) has five subunits: alpha(3), beta(3), gamma(1), delta(1), epsilon(1). CF(0) has three main subunits: a(1), b(2) and c(9-12). The alpha and beta chains form an alternating ring which encloses part of the gamma chain. CF(1) is attached to CF(0) by a central stalk formed by the gamma and epsilon chains, while a peripheral stalk is formed by the delta and b chains.

It is found in the cell inner membrane. Key component of the proton channel; it plays a direct role in the translocation of protons across the membrane. This is ATP synthase subunit a from Pseudomonas syringae pv. tomato (strain ATCC BAA-871 / DC3000).